Reading from the N-terminus, the 222-residue chain is 2-C-methyl-D-erythritol 4-phosphate cytidylyltransferase (222 aa).

This sequence belongs to the IspD/TarI cytidylyltransferase family. IspD subfamily.

It carries out the reaction 2-C-methyl-D-erythritol 4-phosphate + CTP + H(+) = 4-CDP-2-C-methyl-D-erythritol + diphosphate. It functions in the pathway isoprenoid biosynthesis; isopentenyl diphosphate biosynthesis via DXP pathway; isopentenyl diphosphate from 1-deoxy-D-xylulose 5-phosphate: step 2/6. Catalyzes the formation of 4-diphosphocytidyl-2-C-methyl-D-erythritol from CTP and 2-C-methyl-D-erythritol 4-phosphate (MEP). The sequence is that of 2-C-methyl-D-erythritol 4-phosphate cytidylyltransferase from Thermotoga neapolitana (strain ATCC 49049 / DSM 4359 / NBRC 107923 / NS-E).